A 70-amino-acid polypeptide reads, in one-letter code: Small ribosomal subunit protein eS17 (70 aa).

Belongs to the eukaryotic ribosomal protein eS17 family.

This Methanopyrus kandleri (strain AV19 / DSM 6324 / JCM 9639 / NBRC 100938) protein is Small ribosomal subunit protein eS17.